Here is a 933-residue protein sequence, read N- to C-terminus: Potassium voltage-gated channel subfamily KQT member 5 (933 aa).

Topologically, residues 1 to 126 are cytoplasmic; that stretch reads MPRHHAGGEE…YNVLERPRGW (126 aa). S89 is modified (phosphoserine). The chain crosses the membrane as a helical span at residues 127–147; sequence AFVYHAFVFLLVFGCLILSVF. The Extracellular segment spans residues 148-157; it reads STIPEHTKLA. Residues 158-178 traverse the membrane as a helical segment; it reads SSCLLILEFVMIVVFGLEFII. At 179-201 the chain is on the cytoplasmic side; sequence RIWSAGCCCRYRGWQGRLRFARK. Residues 202–222 traverse the membrane as a helical segment; that stretch reads PFCVIDTIVLIASIAVVSAKT. The Extracellular portion of the chain corresponds to 223 to 230; that stretch reads QGNIFATS. The helical; Voltage-sensor transmembrane segment at 231–253 threads the bilayer; sequence ALRSLRFLQILRMVRMDRRGGTW. A 1,2-diacyl-sn-glycero-3-phospho-(1D-myo-inositol-4,5-bisphosphate) is bound by residues R249 and K265. The Cytoplasmic segment spans residues 254–267; the sequence is KLLGSVVYAHSKEL. Residues 268–288 traverse the membrane as a helical segment; that stretch reads ITAWYIGFLVLIFSSFLVYLV. The Extracellular segment spans residues 289 to 299; the sequence is EKDANKEFSTY. The pore-forming intramembrane region spans 300-320; sequence ADALWWGTITLTTIGYGDKTP. The Extracellular portion of the chain corresponds to 321-326; that stretch reads LTWLGR. The chain crosses the membrane as a helical span at residues 327–347; the sequence is LLSAGFALLGISFFALPAGIL. Topologically, residues 348–933 are cytoplasmic; that stretch reads GSGFALKVQE…ALSLPHVKLN (586 aa). K362 lines the a 1,2-diacyl-sn-glycero-3-phospho-(1D-myo-inositol-4,5-bisphosphate) pocket. Positions 371–379 are interaction with CALM; the sequence is AANLIQCVW. A disordered region spans residues 405–465; sequence SPTKKEQGEA…EGSPTKVQKS (61 aa). Over residues 432–441 the composition is skewed to polar residues; it reads RGQSIKSRQA. Residue S448 is modified to Phosphoserine. The interaction with CALM stretch occupies residues 522 to 529; the sequence is VIRAIRIM. Residues 578–598 are disordered; sequence KGQMTSDKKSREKITAEHETT. Residues 583-598 are compositionally biased toward basic and acidic residues; sequence SDKKSREKITAEHETT. A Phosphoserine modification is found at S832. The segment at 878–933 is disordered; that stretch reads GAEETETDTFDGTPPPAGEAAFSSDSLRTGRSRSSQNICKTGDSTDALSLPHVKLN. Positions 900 to 924 are enriched in polar residues; it reads SSDSLRTGRSRSSQNICKTGDSTDA.

Belongs to the potassium channel family. KQT (TC 1.A.1.15) subfamily. Kv7.5/KCNQ5 sub-subfamily. In terms of assembly, homotetramer; forms a functional homotetrameric channel resulting in the expression of a small M-current. Heterotetramer with KCNQ3; forms heterotetrameric M-channel responsible for the native M-current. Heterotetramer with KCNQ1; forms a functional voltage-gated potassium channel. Interacts (via C-terminus) with calmodulin/CALM; forms a heterooctameric structure (with 4:4 KCNQ1:CALM stoichiometry); the interaction is calcium-independent, constitutive and participates in the channel function. Strongly expressed in brain. Also expressed in colon, lung and uterus.

The protein resides in the cell membrane. It carries out the reaction K(+)(in) = K(+)(out). Phosphatidylinositol-4,5-bisphosphate (PIP2) is essential to activate KCNQ5 channel by inducing the coupling of the voltage-sensing domain (VSD) and the pore-forming domain (PD). Calcium suppresses KCNQ5 channel current through calcium-bound CALM C-terminus. Therefore CALM acts as calcium sensor that controls channel activity. Zinc potentiates channel activity in a pH-dependent manner. The activity is modulated by small changes in cell volume. Activated by the anticonvulsant retigabine. Inhibited by linopirdine and XE991. In terms of biological role, pore-forming subunit of the voltage-gated potassium (Kv) channel broadly expressed in brain and skeletal muscle and involved in the regulation of neuronal excitability. Associates with KCNQ3/Kv7.3 pore-forming subunit to form a potassium channel which contributes to M-type current, a slowly activating and deactivating potassium conductance which plays a critical role in determining the subthreshold electrical excitability of neurons. Contributes, with other potassium channels, to the molecular diversity of a heterogeneous population of M-channels, varying in kinetic and pharmacological properties, which underlie this physiologically important current. Also forms a functional channel with KCNQ1/Kv7.1 subunit that may contribute to vasoconstriction and hypertension. Channel may be selectively permeable in vitro to other cations besides potassium, in decreasing order of affinity K(+) = Rb(+) &gt; Cs(+) &gt; Na(+). This Mus musculus (Mouse) protein is Potassium voltage-gated channel subfamily KQT member 5.